The following is a 389-amino-acid chain: Succinate--CoA ligase [ADP-forming] subunit beta (389 aa).

The 228-residue stretch at 9–236 (RDMFEAHGVP…KDAADPLEAK (228 aa)) folds into the ATP-grasp domain. Residues K45, 52–54 (GRG), A94, and E99 contribute to the ATP site. The Mg(2+) site is built by N191 and D205. Substrate is bound by residues N256 and 318-320 (GIT).

It belongs to the succinate/malate CoA ligase beta subunit family. Heterotetramer of two alpha and two beta subunits. It depends on Mg(2+) as a cofactor.

The enzyme catalyses succinate + ATP + CoA = succinyl-CoA + ADP + phosphate. The catalysed reaction is GTP + succinate + CoA = succinyl-CoA + GDP + phosphate. It participates in carbohydrate metabolism; tricarboxylic acid cycle; succinate from succinyl-CoA (ligase route): step 1/1. Succinyl-CoA synthetase functions in the citric acid cycle (TCA), coupling the hydrolysis of succinyl-CoA to the synthesis of either ATP or GTP and thus represents the only step of substrate-level phosphorylation in the TCA. The beta subunit provides nucleotide specificity of the enzyme and binds the substrate succinate, while the binding sites for coenzyme A and phosphate are found in the alpha subunit. In Paenarthrobacter aurescens (strain TC1), this protein is Succinate--CoA ligase [ADP-forming] subunit beta.